Consider the following 95-residue polypeptide: Mitochondrial import inner membrane translocase subunit Tim9 (95 aa).

The short motif at 35 to 59 (CFTDCIRDFTTRDVKDSEEKCSLNC) is the Twin CX3C motif element. Cystine bridges form between Cys-35–Cys-59 and Cys-39–Cys-55.

This sequence belongs to the small Tim family. In terms of assembly, heterohexamer; composed of 3 copies of Tim9 and 3 copies of Tim10, named soluble 70 kDa complex. The complex associates with the Tim22 component of the TIM22 complex. Interacts with multi-pass transmembrane proteins in transit.

The protein localises to the mitochondrion inner membrane. In terms of biological role, mitochondrial intermembrane chaperone that participates in the import and insertion of multi-pass transmembrane proteins into the mitochondrial inner membrane. May also be required for the transfer of beta-barrel precursors from the TOM complex to the sorting and assembly machinery (SAM complex) of the outer membrane. Acts as a chaperone-like protein that protects the hydrophobic precursors from aggregation and guide them through the mitochondrial intermembrane space. The protein is Mitochondrial import inner membrane translocase subunit Tim9 (Tim9a) of Drosophila melanogaster (Fruit fly).